The following is a 388-amino-acid chain: Chorismate synthase (388 aa).

NADP(+)-binding residues include arginine 39 and arginine 45. FMN-binding positions include 130–132 (RSS), 251–252 (NA), glycine 296, 311–315 (KPIPT), and arginine 337.

The protein belongs to the chorismate synthase family. In terms of assembly, homotetramer. The cofactor is FMNH2.

The catalysed reaction is 5-O-(1-carboxyvinyl)-3-phosphoshikimate = chorismate + phosphate. Its pathway is metabolic intermediate biosynthesis; chorismate biosynthesis; chorismate from D-erythrose 4-phosphate and phosphoenolpyruvate: step 7/7. Functionally, catalyzes the anti-1,4-elimination of the C-3 phosphate and the C-6 proR hydrogen from 5-enolpyruvylshikimate-3-phosphate (EPSP) to yield chorismate, which is the branch point compound that serves as the starting substrate for the three terminal pathways of aromatic amino acid biosynthesis. This reaction introduces a second double bond into the aromatic ring system. The chain is Chorismate synthase from Streptococcus pyogenes serotype M28 (strain MGAS6180).